Reading from the N-terminus, the 428-residue chain is Serine--tRNA ligase (428 aa).

Position 231 to 233 (T231 to E233) interacts with L-serine. R262–E264 contacts ATP. Residue E285 participates in L-serine binding. Residue E349–S352 participates in ATP binding. Position 385 (S385) interacts with L-serine.

This sequence belongs to the class-II aminoacyl-tRNA synthetase family. Type-1 seryl-tRNA synthetase subfamily. In terms of assembly, homodimer. The tRNA molecule binds across the dimer.

The protein resides in the cytoplasm. It catalyses the reaction tRNA(Ser) + L-serine + ATP = L-seryl-tRNA(Ser) + AMP + diphosphate + H(+). It carries out the reaction tRNA(Sec) + L-serine + ATP = L-seryl-tRNA(Sec) + AMP + diphosphate + H(+). The protein operates within aminoacyl-tRNA biosynthesis; selenocysteinyl-tRNA(Sec) biosynthesis; L-seryl-tRNA(Sec) from L-serine and tRNA(Sec): step 1/1. Catalyzes the attachment of serine to tRNA(Ser). Is also able to aminoacylate tRNA(Sec) with serine, to form the misacylated tRNA L-seryl-tRNA(Sec), which will be further converted into selenocysteinyl-tRNA(Sec). The polypeptide is Serine--tRNA ligase (Staphylococcus aureus (strain MSSA476)).